Consider the following 712-residue polypeptide: Dipeptidyl-peptidase 7 (712 aa).

A signal peptide spans 1 to 23 (MQMKLKSILLGAALLLGASGVAK). H89 serves as the catalytic Charge relay system. A coiled-coil region spans residues 136–173 (TDKVEGQLKGITDEMERLRKAQEVCQELAKKENADENQ). Catalysis depends on charge relay system residues D225 and S648.

Belongs to the peptidase S46 family.

Its subcellular location is the cell outer membrane. Its activity is regulated as follows. Is inhibited in vitro by typical serine protease inhibitors like diisopropyl fluorophosphate, Pefablock, and 3,4-dichloroisocoumarin, but not by typical cysteine class inhibitors such as E-64 or iododoacetic acid. Catalyzes the removal of dipeptides from the N-terminus of oligopeptides. Shows a broad specificity for both aliphatic and aromatic residues in the P1 position, with glycine or proline being not acceptable in this position. Most potently cleaves the synthetic substrate Met-Leu-methylcoumaryl-7-amide (Met-Leu-MCA), Leu-Arg-MCA and Lys-Ala-MCA to a lesser extent. Is likely involved in amino acid metabolism and bacterial growth of asaccharolytic P.gingivalis, that utilizes amino acids from extracellular proteinaceous nutrients as energy and carbon sources. The sequence is that of Dipeptidyl-peptidase 7 from Porphyromonas gingivalis (strain ATCC 33277 / DSM 20709 / CIP 103683 / JCM 12257 / NCTC 11834 / 2561).